Here is a 57-residue protein sequence, read N- to C-terminus: Metallothionein-2 (57 aa).

The interval 1-28 is beta; it reads PDPCCNDKCDCKEGECKTGCKCTSCRCP. Residues Cys4, Cys5, Cys9, Cys11, Cys16, Cys20, Cys22, Cys25, Cys27, Cys30, Cys33, Cys37, Cys39, Cys45, Cys49, Cys53, Cys55, and Cys56 each contribute to the a divalent metal cation site. The tract at residues 29-57 is alpha; it reads PCEQCSSGCKCANKEDCRKTCSKPCSCCP.

Belongs to the metallothionein superfamily. Type 3 family.

Metallothioneins have a high content of cysteine residues that bind various heavy metals. Class I MTS in marine crustacea are involved in the sequestration of elevated levels of heavy-metal ions. The protein is Metallothionein-2 of Scylla serrata (Mud crab).